A 189-amino-acid polypeptide reads, in one-letter code: ComE operon protein 2 (189 aa).

A CMP/dCMP-type deaminase domain is found at 5–132; it reads SWNQYFMAQS…PYAQELFEQA (128 aa). H70 is a binding site for Zn(2+). E72 acts as the Proton donor in catalysis. C98 and C101 together coordinate Zn(2+).

This sequence belongs to the cytidine and deoxycytidylate deaminase family. The cofactor is Zn(2+).

In terms of biological role, dispensable for transformability. The protein is ComE operon protein 2 (comEB) of Bacillus subtilis (strain 168).